Reading from the N-terminus, the 252-residue chain is Probable endonuclease 4 (252 aa).

Zn(2+)-binding residues include histidine 56, histidine 96, glutamate 129, aspartate 162, histidine 165, histidine 191, aspartate 204, histidine 206, and glutamate 233.

It belongs to the AP endonuclease 2 family. The cofactor is Zn(2+).

The catalysed reaction is Endonucleolytic cleavage to 5'-phosphooligonucleotide end-products.. Functionally, endonuclease IV plays a role in DNA repair. It cleaves phosphodiester bonds at apurinic or apyrimidinic (AP) sites, generating a 3'-hydroxyl group and a 5'-terminal sugar phosphate. In Mycobacterium ulcerans (strain Agy99), this protein is Probable endonuclease 4.